A 496-amino-acid chain; its full sequence is Trimethylamine methyltransferase MttB (496 aa).

Residue Pyl-331 is a non-standard amino acid, pyrrolysine.

The protein belongs to the trimethylamine methyltransferase family.

It carries out the reaction Co(I)-[trimethylamine-specific corrinoid protein] + trimethylamine + H(+) = methyl-Co(III)-[trimethylamine-specific corrinoid protein] + dimethylamine. Catalyzes the transfer of a methyl group from trimethylamine to the corrinoid cofactor of MttC. This is Trimethylamine methyltransferase MttB from Desulfitobacterium hafniense (strain DSM 10664 / DCB-2).